Consider the following 798-residue polypeptide: Suppressor of spindle checkpoint defect 1 (798 aa).

A coiled-coil region spans residues glutamate 339–glutamate 359.

Belongs to the APC5 family. In terms of assembly, the APC/C complex is probably composed of at least 12 subunits: apc-2, apc-10, apc-11, cdc-26, emb-1, emb-27, emb-30, mat-1, mat-2, mat-3, such-1 and gfi-3. As to expression, expressed in head neurons, vulval precursor cells and in mature sperm stored in the spermatheca.

It functions in the pathway protein modification; protein ubiquitination. In terms of biological role, probable component of the anaphase promoting complex/cyclosome (APC/C), a cell cycle-regulated E3 ubiquitin ligase that controls progression through mitosis and the G1 phase of the cell cycle. The APC/C complex acts by mediating ubiquitination and subsequent degradation of target proteins. Required for the metaphase to anaphase transition in meiosis. Plays a role in the segregation of DNA and centrioles during meiosis in male germ cells. The polypeptide is Suppressor of spindle checkpoint defect 1 (Caenorhabditis elegans).